The sequence spans 288 residues: Chitinase 5 (288 aa).

Positions M1–A29 are cleaved as a signal peptide. Positions Q30–G64 constitute a Chitin-binding type-1 domain. Intrachain disulfides connect C32–C40, C34–C46, C39–C53, C57–C62, C107–C156, C169–C178, and C256–C288. E151 functions as the Proton donor in the catalytic mechanism.

It belongs to the glycosyl hydrolase 19 family. Chitinase class IV subfamily. As to expression, expressed in sheaths and meristems and at lower levels in roots and leaves.

The catalysed reaction is Random endo-hydrolysis of N-acetyl-beta-D-glucosaminide (1-&gt;4)-beta-linkages in chitin and chitodextrins.. In terms of biological role, may function in reproductive organs during embryogenesis and seed maturation. This chain is Chitinase 5 (Cht5), found in Oryza sativa subsp. japonica (Rice).